The chain runs to 96 residues: UPF0298 protein LCA_1075 (96 aa).

Belongs to the UPF0298 family.

It localises to the cytoplasm. This is UPF0298 protein LCA_1075 from Latilactobacillus sakei subsp. sakei (strain 23K) (Lactobacillus sakei subsp. sakei).